The following is a 194-amino-acid chain: Lytic chitin monooxygenase (194 aa).

The first 28 residues, 1-28, serve as a signal peptide directing secretion; sequence MKKSLLTIVLAFSFVLGGAALAPTVSEA. Cu cation is bound by residues His-29 and His-114. The 163-residue stretch at 29-191 folds into the Chitin-binding type-4 domain; that stretch reads HGYVASPGSR…VNAFYQAIDV (163 aa).

Requires Cu(2+) as cofactor.

Its subcellular location is the secreted. It catalyses the reaction [(1-&gt;4)-N-acetyl-beta-D-glucosaminyl]n+m + reduced acceptor + O2 = [(1-&gt;4)-N-acetyl-beta-D-glucosaminyl]m-1-(1-&gt;4)-2-(acetylamino)-2-deoxy-D-glucono-1,5-lactone + [(1-&gt;4)-N-acetyl-beta-D-glucosaminyl]n + acceptor + H2O.. It functions in the pathway glycan degradation; chitin degradation. Its function is as follows. Involved in chitin degradation. Catalyzes the oxidative cleavage of glycosidic bonds in both alpha- and beta-chitin via a copper-dependent mechanism, leading to oxidized chitooligosaccharides with a dominance of even-numbered products. Acts synergistically with the chitinase EfChi18A, and combining the two enzymes leads to rapid and complete depolymerization of crystalline chitin, especially with beta-chitin as a substrate. Is likely involved in a chitin degradation pathway that allows E.faecalis V583 to grow on chitin as a carbon source. This Enterococcus faecalis (strain ATCC 700802 / V583) protein is Lytic chitin monooxygenase.